A 684-amino-acid chain; its full sequence is Suppressor of presenilin protein 3 (684 aa).

5 consecutive C2H2-type zinc fingers follow at residues 21 to 43 (YKCHLCGQCFYRGCGLASHLRRH), 48 to 71 (FDCEHCAYTCKHKYAYDRHLLQSH), 123 to 145 (YKCPLCISTFGSHARAVYHILSH), 261 to 283 (YLCRNCPYVSWNVSSLWRHFRHH), and 291 to 313 (WTCIACSYSSSSRVKIDLHVKMH). Disordered regions lie at residues 337 to 359 (DLNKPTNKKKKPDGGNGSNHSDM), 419 to 440 (KNNSNPTVLPNKRNSIKTSKSD), and 469 to 501 (TSKFYRPESPDSLASNNSAHGDEIESTSSDQFQ). 2 consecutive C2H2-type zinc fingers follow at residues 590–612 (RECTDCPFKHNDLQQFRLHRDKH) and 618–641 (HTCPECNYSSNNHNQVVEHTFVDH). Residues 652-684 (LPSSDSEDDNIPVPPDTPQRKKKAPKRGKRRGW) are disordered. Residues 671-684 (RKKKAPKRGKRRGW) show a composition bias toward basic residues.

Its subcellular location is the nucleus. Its function is as follows. Probable transcriptional regulator, which participates in the transcriptional repression of the presenilin protein hop-1. This chain is Suppressor of presenilin protein 3 (spr-3), found in Caenorhabditis elegans.